Reading from the N-terminus, the 428-residue chain is Kynureninase (428 aa).

Pyridoxal 5'-phosphate is bound by residues threonine 104, threonine 105, 132–135 (FPSD), aspartate 213, histidine 216, and tyrosine 238. The residue at position 239 (lysine 239) is an N6-(pyridoxal phosphate)lysine. Pyridoxal 5'-phosphate contacts are provided by tryptophan 267 and threonine 295.

The protein belongs to the kynureninase family. Homodimer. Pyridoxal 5'-phosphate serves as cofactor.

It carries out the reaction L-kynurenine + H2O = anthranilate + L-alanine + H(+). It catalyses the reaction 3-hydroxy-L-kynurenine + H2O = 3-hydroxyanthranilate + L-alanine + H(+). The protein operates within amino-acid degradation; L-kynurenine degradation; L-alanine and anthranilate from L-kynurenine: step 1/1. Its pathway is cofactor biosynthesis; NAD(+) biosynthesis; quinolinate from L-kynurenine: step 2/3. Catalyzes the cleavage of L-kynurenine (L-Kyn) and L-3-hydroxykynurenine (L-3OHKyn) into anthranilic acid (AA) and 3-hydroxyanthranilic acid (3-OHAA), respectively. This Bacillus anthracis protein is Kynureninase.